Consider the following 225-residue polypeptide: UPF0502 protein Ajs_3392 (225 aa).

It belongs to the UPF0502 family.

The sequence is that of UPF0502 protein Ajs_3392 from Acidovorax sp. (strain JS42).